We begin with the raw amino-acid sequence, 43 residues long: Probable intron-encoded DNA endonuclease 2 (43 aa).

Belongs to the LAGLIDADG endonuclease family.

Its subcellular location is the mitochondrion. In terms of biological role, mitochondrial DNA endonuclease involved in intron homing. This chain is Probable intron-encoded DNA endonuclease 2 (hegI2), found in Mycosarcoma maydis (Corn smut fungus).